A 198-amino-acid polypeptide reads, in one-letter code: Holliday junction branch migration complex subunit RuvA (198 aa).

Residues 1 to 63 (MIAYLSGAVR…EDAQLLFGFL (63 aa)) are domain I. Residues 64–142 (DTDSLRLFDL…EHLAAGAPVS (79 aa)) are domain II. Residues 143–150 (AGKAALTS) form a flexible linker region. The domain III stretch occupies residues 150 to 198 (STAGRDAIEALLALGFREPQVRSVVAELLAADPEQSADALIRKGLGKLR).

The protein belongs to the RuvA family. In terms of assembly, homotetramer. Forms an RuvA(8)-RuvB(12)-Holliday junction (HJ) complex. HJ DNA is sandwiched between 2 RuvA tetramers; dsDNA enters through RuvA and exits via RuvB. An RuvB hexamer assembles on each DNA strand where it exits the tetramer. Each RuvB hexamer is contacted by two RuvA subunits (via domain III) on 2 adjacent RuvB subunits; this complex drives branch migration. In the full resolvosome a probable DNA-RuvA(4)-RuvB(12)-RuvC(2) complex forms which resolves the HJ.

The protein localises to the cytoplasm. Its function is as follows. The RuvA-RuvB-RuvC complex processes Holliday junction (HJ) DNA during genetic recombination and DNA repair, while the RuvA-RuvB complex plays an important role in the rescue of blocked DNA replication forks via replication fork reversal (RFR). RuvA specifically binds to HJ cruciform DNA, conferring on it an open structure. The RuvB hexamer acts as an ATP-dependent pump, pulling dsDNA into and through the RuvAB complex. HJ branch migration allows RuvC to scan DNA until it finds its consensus sequence, where it cleaves and resolves the cruciform DNA. In Deinococcus geothermalis (strain DSM 11300 / CIP 105573 / AG-3a), this protein is Holliday junction branch migration complex subunit RuvA.